Reading from the N-terminus, the 258-residue chain is Aspartate/glutamate leucyltransferase (258 aa).

This sequence belongs to the R-transferase family. Bpt subfamily.

It is found in the cytoplasm. The enzyme catalyses N-terminal L-glutamyl-[protein] + L-leucyl-tRNA(Leu) = N-terminal L-leucyl-L-glutamyl-[protein] + tRNA(Leu) + H(+). It carries out the reaction N-terminal L-aspartyl-[protein] + L-leucyl-tRNA(Leu) = N-terminal L-leucyl-L-aspartyl-[protein] + tRNA(Leu) + H(+). Functionally, functions in the N-end rule pathway of protein degradation where it conjugates Leu from its aminoacyl-tRNA to the N-termini of proteins containing an N-terminal aspartate or glutamate. The polypeptide is Aspartate/glutamate leucyltransferase (Bradyrhizobium diazoefficiens (strain JCM 10833 / BCRC 13528 / IAM 13628 / NBRC 14792 / USDA 110)).